The following is a 669-amino-acid chain: UvrABC system protein C (669 aa).

In terms of domain architecture, GIY-YIG spans 14 to 91 (DSPGCYLHKD…IQRYKPKYNI (78 aa)). A UVR domain is found at 196-231 (KKIVKELEGKMISASDNMEFEQAAEYRDVIKAIGTL). Positions 647–669 (PHKSDENWESIKDNVPLLKSEKS) are disordered. Residues 648 to 658 (HKSDENWESIK) show a composition bias toward basic and acidic residues.

Belongs to the UvrC family. In terms of assembly, interacts with UvrB in an incision complex.

The protein resides in the cytoplasm. The UvrABC repair system catalyzes the recognition and processing of DNA lesions. UvrC both incises the 5' and 3' sides of the lesion. The N-terminal half is responsible for the 3' incision and the C-terminal half is responsible for the 5' incision. This chain is UvrABC system protein C, found in Lactococcus lactis subsp. cremoris (strain MG1363).